Consider the following 556-residue polypeptide: Arginine--tRNA ligase (556 aa).

Positions 134-144 (ANPTGPLHIGH) match the 'HIGH' region motif.

It belongs to the class-I aminoacyl-tRNA synthetase family. Monomer.

The protein resides in the cytoplasm. The enzyme catalyses tRNA(Arg) + L-arginine + ATP = L-arginyl-tRNA(Arg) + AMP + diphosphate. The sequence is that of Arginine--tRNA ligase from Micrococcus luteus (strain ATCC 4698 / DSM 20030 / JCM 1464 / CCM 169 / CCUG 5858 / IAM 1056 / NBRC 3333 / NCIMB 9278 / NCTC 2665 / VKM Ac-2230) (Micrococcus lysodeikticus).